We begin with the raw amino-acid sequence, 248 residues long: MSDGEQAKSRRRRGRRRGRRAAATAENHMDAQPAGDATPTPATAKRSRSRSPRRGSTRMRTVHETSAGGLVIDGIDGPRDAQVAALIGRVDRRGRLLWSLPKGHIELGETAEQTAIREVAEETGIRGSVLAALGRIDYWFVTDGRRVHKTVHHYLMRFLGGELSDEDLEVAEVAWVPIRELPSRLAYADERRLAEVADELIDKLQSDGPAALPPLPPSSPRRRPQTHSRARHADDSAPGQHNGPGPGP.

The tract at residues 1-64 is disordered; that stretch reads MSDGEQAKSR…GSTRMRTVHE (64 aa). Over residues 9–20 the composition is skewed to basic residues; the sequence is SRRRRGRRRGRR. The span at 31 to 44 shows a compositional bias: low complexity; it reads AQPAGDATPTPATA. Over residues 45–57 the composition is skewed to basic residues; that stretch reads KRSRSRSPRRGST. A Nudix hydrolase domain is found at 62-198; it reads VHETSAGGLV…DERRLAEVAD (137 aa). Mg(2+) contacts are provided by Gly103, Glu118, Glu121, and Glu122. The Nudix box motif lies at 103–124; that stretch reads GHIELGETAEQTAIREVAEETG. The tract at residues 204–248 is disordered; that stretch reads LQSDGPAALPPLPPSSPRRRPQTHSRARHADDSAPGQHNGPGPGP. Residues 220–230 are compositionally biased toward basic residues; the sequence is PRRRPQTHSRA.

This sequence belongs to the Nudix hydrolase family. It depends on Mg(2+) as a cofactor. Mn(2+) is required as a cofactor.

May be involved in the GO system responsible for removing an oxidatively damaged form of guanine (7,8-dihydro-8-oxoguanine, 8-oxo-dGTP) from DNA and the nucleotide pool. This chain is Putative mutator protein MutT4 (mutT4), found in Mycobacterium tuberculosis (strain CDC 1551 / Oshkosh).